We begin with the raw amino-acid sequence, 60 residues long: MAVPKFKPSKSRSRTRRSINMRKKIPQFQECSNCGNLAVRHRVCVKCGYYRNSQYLELGL.

The protein belongs to the bacterial ribosomal protein bL32 family.

This is Large ribosomal subunit protein bL32 from Borrelia turicatae (strain 91E135).